We begin with the raw amino-acid sequence, 220 residues long: Small ribosomal subunit protein uS2 (220 aa).

The protein belongs to the universal ribosomal protein uS2 family.

The polypeptide is Small ribosomal subunit protein uS2 (Methanococcus maripaludis (strain DSM 14266 / JCM 13030 / NBRC 101832 / S2 / LL)).